Reading from the N-terminus, the 229-residue chain is UPF0758 protein CLL_A0562 (229 aa).

Residues 107–229 (KIMSPNDLAM…FISLKEKGFI (123 aa)) form the MPN domain. 3 residues coordinate Zn(2+): H178, H180, and D191. Residues 178 to 191 (HNHPSGDPTPSKED) carry the JAMM motif motif.

It belongs to the UPF0758 family.

This chain is UPF0758 protein CLL_A0562, found in Clostridium botulinum (strain Eklund 17B / Type B).